The following is a 122-amino-acid chain: Histone H2B (122 aa).

The tract at residues 1 to 31 (MPPKPSGKGQKKAGKAKGAPSTNKKRKRKRK) is disordered. Pro2 bears the N,N-dimethylproline mark. Gln10 participates in a covalent cross-link: Isoglutamyl lysine isopeptide (Gln-Lys) (interchain with K-5 in histone H4). Ser109 carries an O-linked (GlcNAc) serine glycan. Residue Lys117 forms a Glycyl lysine isopeptide (Lys-Gly) (interchain with G-Cter in ubiquitin) linkage.

The protein belongs to the histone H2B family. In terms of assembly, the nucleosome is a histone octamer containing two molecules each of H2A, H2B, H3 and H4 assembled in one H3-H4 heterotetramer and two H2A-H2B heterodimers. The octamer wraps approximately 147 bp of DNA. Monoubiquitination of Lys-117 gives a specific tag for epigenetic transcriptional activation and is also prerequisite for histone H3 'Lys-4' and 'Lys-79' methylation. Post-translationally, glcNAcylation at Ser-109 promotes monoubiquitination of Lys-117. It fluctuates in response to extracellular glucose, and associates with transcribed genes.

Its subcellular location is the nucleus. The protein resides in the chromosome. Functionally, core component of nucleosome. Nucleosomes wrap and compact DNA into chromatin, limiting DNA accessibility to the cellular machineries which require DNA as a template. Histones thereby play a central role in transcription regulation, DNA repair, DNA replication and chromosomal stability. DNA accessibility is regulated via a complex set of post-translational modifications of histones, also called histone code, and nucleosome remodeling. The polypeptide is Histone H2B (Patiria pectinifera (Starfish)).